The sequence spans 371 residues: Queuine tRNA-ribosyltransferase (371 aa).

Asp-90 acts as the Proton acceptor in catalysis. Substrate-binding positions include 90–94 (DSGGF), Asp-144, Gln-188, and Gly-215. The RNA binding stretch occupies residues 246 to 252 (GVGTPED). Asp-265 acts as the Nucleophile in catalysis. The tract at residues 270–274 (TRNAR) is RNA binding; important for wobble base 34 recognition. Cys-303, Cys-305, Cys-308, and His-334 together coordinate Zn(2+).

It belongs to the queuine tRNA-ribosyltransferase family. As to quaternary structure, homodimer. Within each dimer, one monomer is responsible for RNA recognition and catalysis, while the other monomer binds to the replacement base PreQ1. Zn(2+) serves as cofactor.

The enzyme catalyses 7-aminomethyl-7-carbaguanine + guanosine(34) in tRNA = 7-aminomethyl-7-carbaguanosine(34) in tRNA + guanine. The protein operates within tRNA modification; tRNA-queuosine biosynthesis. Functionally, catalyzes the base-exchange of a guanine (G) residue with the queuine precursor 7-aminomethyl-7-deazaguanine (PreQ1) at position 34 (anticodon wobble position) in tRNAs with GU(N) anticodons (tRNA-Asp, -Asn, -His and -Tyr). Catalysis occurs through a double-displacement mechanism. The nucleophile active site attacks the C1' of nucleotide 34 to detach the guanine base from the RNA, forming a covalent enzyme-RNA intermediate. The proton acceptor active site deprotonates the incoming PreQ1, allowing a nucleophilic attack on the C1' of the ribose to form the product. After dissociation, two additional enzymatic reactions on the tRNA convert PreQ1 to queuine (Q), resulting in the hypermodified nucleoside queuosine (7-(((4,5-cis-dihydroxy-2-cyclopenten-1-yl)amino)methyl)-7-deazaguanosine). The sequence is that of Queuine tRNA-ribosyltransferase from Neisseria meningitidis serogroup C / serotype 2a (strain ATCC 700532 / DSM 15464 / FAM18).